We begin with the raw amino-acid sequence, 106 residues long: Large ribosomal subunit protein uL23 (106 aa).

Belongs to the universal ribosomal protein uL23 family. Part of the 50S ribosomal subunit. Contacts protein L29, and trigger factor when it is bound to the ribosome.

In terms of biological role, one of the early assembly proteins it binds 23S rRNA. One of the proteins that surrounds the polypeptide exit tunnel on the outside of the ribosome. Forms the main docking site for trigger factor binding to the ribosome. This Neisseria meningitidis serogroup C / serotype 2a (strain ATCC 700532 / DSM 15464 / FAM18) protein is Large ribosomal subunit protein uL23.